Here is an 88-residue protein sequence, read N- to C-terminus: Small ribosomal subunit protein uS17 (88 aa).

It belongs to the universal ribosomal protein uS17 family. In terms of assembly, part of the 30S ribosomal subunit.

In terms of biological role, one of the primary rRNA binding proteins, it binds specifically to the 5'-end of 16S ribosomal RNA. The sequence is that of Small ribosomal subunit protein uS17 from Synechococcus sp. (strain WH7803).